Reading from the N-terminus, the 120-residue chain is Large ribosomal subunit protein uL18 (120 aa).

This sequence belongs to the universal ribosomal protein uL18 family. In terms of assembly, part of the 50S ribosomal subunit; part of the 5S rRNA/L5/L18/L25 subcomplex. Contacts the 5S and 23S rRNAs.

Functionally, this is one of the proteins that bind and probably mediate the attachment of the 5S RNA into the large ribosomal subunit, where it forms part of the central protuberance. The sequence is that of Large ribosomal subunit protein uL18 from Rhodopseudomonas palustris (strain BisB18).